Here is a 397-residue protein sequence, read N- to C-terminus: Putative nickel insertion protein (397 aa).

This sequence belongs to the LarC family.

In Synechococcus sp. (strain JA-3-3Ab) (Cyanobacteria bacterium Yellowstone A-Prime), this protein is Putative nickel insertion protein.